Consider the following 139-residue polypeptide: Envelope glycoprotein N (139 aa).

The Virion surface portion of the chain corresponds to 1 to 100; it reads MACGKTESGD…CHSHFYGLSV (100 aa). A helical membrane pass occupies residues 101–121; that stretch reads SSFASIWMMVNAIVFICAFGV. The Intravirion segment spans residues 122 to 139; sequence FMRHWCYKAFTSDTAKGY.

The protein belongs to the herpesviridae glycoprotein N family. In terms of assembly, interacts (via N-terminus) with gM (via N-terminus). The gM-gN heterodimer forms the gCII complex.

The protein localises to the virion membrane. The protein resides in the host membrane. Its subcellular location is the host Golgi apparatus. It is found in the host trans-Golgi network. Its function is as follows. Envelope glycoprotein necessary for proper maturation of gM and modulation of its membrane fusion activity. Also plays a critical role in virion morphogenesis. In Mus musculus (Mouse), this protein is Envelope glycoprotein N.